Here is a 216-residue protein sequence, read N- to C-terminus: 3-isopropylmalate dehydratase small subunit (216 aa).

This sequence belongs to the LeuD family. LeuD type 1 subfamily. Heterodimer of LeuC and LeuD.

It carries out the reaction (2R,3S)-3-isopropylmalate = (2S)-2-isopropylmalate. Its pathway is amino-acid biosynthesis; L-leucine biosynthesis; L-leucine from 3-methyl-2-oxobutanoate: step 2/4. Functionally, catalyzes the isomerization between 2-isopropylmalate and 3-isopropylmalate, via the formation of 2-isopropylmaleate. This is 3-isopropylmalate dehydratase small subunit from Bordetella avium (strain 197N).